The primary structure comprises 180 residues: Hypoxanthine-guanine phosphoribosyltransferase (180 aa).

Positions 43 and 44 each coordinate diphosphate. Positions 99 and 100 each coordinate Mg(2+). Asp103 functions as the Proton acceptor in the catalytic mechanism. GMP-binding positions include Lys131, 152–153 (FI), and Asp159. Arg165 contacts diphosphate.

Belongs to the purine/pyrimidine phosphoribosyltransferase family. Mg(2+) serves as cofactor.

The protein resides in the cytoplasm. The enzyme catalyses IMP + diphosphate = hypoxanthine + 5-phospho-alpha-D-ribose 1-diphosphate. The catalysed reaction is GMP + diphosphate = guanine + 5-phospho-alpha-D-ribose 1-diphosphate. It functions in the pathway purine metabolism; IMP biosynthesis via salvage pathway; IMP from hypoxanthine: step 1/1. Its pathway is purine metabolism; GMP biosynthesis via salvage pathway; GMP from guanine: step 1/1. In terms of biological role, purine salvage pathway enzyme that catalyzes the transfer of the ribosyl-5-phosphate group from 5-phospho-alpha-D-ribose 1-diphosphate (PRPP) to the N9 position of the 6-oxopurines hypoxanthine and guanine to form the corresponding ribonucleotides IMP (inosine 5'-monophosphate) and GMP (guanosine 5'-monophosphate), with the release of PPi. This chain is Hypoxanthine-guanine phosphoribosyltransferase (hpt), found in Streptococcus mutans serotype c (strain ATCC 700610 / UA159).